Here is a 362-residue protein sequence, read N- to C-terminus: Methylthioribose-1-phosphate isomerase (362 aa).

Residues 53–55 (RGA), arginine 90, and glutamine 201 each bind substrate. The Proton donor role is filled by aspartate 242. 252 to 253 (NK) is a binding site for substrate.

It belongs to the eIF-2B alpha/beta/delta subunits family. MtnA subfamily.

It carries out the reaction 5-(methylsulfanyl)-alpha-D-ribose 1-phosphate = 5-(methylsulfanyl)-D-ribulose 1-phosphate. The protein operates within amino-acid biosynthesis; L-methionine biosynthesis via salvage pathway; L-methionine from S-methyl-5-thio-alpha-D-ribose 1-phosphate: step 1/6. Catalyzes the interconversion of methylthioribose-1-phosphate (MTR-1-P) into methylthioribulose-1-phosphate (MTRu-1-P). This Paramagnetospirillum magneticum (strain ATCC 700264 / AMB-1) (Magnetospirillum magneticum) protein is Methylthioribose-1-phosphate isomerase.